The sequence spans 398 residues: Subtilisin-like protease CPC735_015300 (398 aa).

A signal peptide spans M1–A19. The propeptide occupies A20 to T116. Residues Q35–L115 enclose the Inhibitor I9 domain. One can recognise a Peptidase S8 domain in the interval T126–Q398. Active-site charge relay system residues include D158 and H189. The N-linked (GlcNAc...) asparagine glycan is linked to N250. S344 serves as the catalytic Charge relay system. An N-linked (GlcNAc...) asparagine glycan is attached at N362.

Belongs to the peptidase S8 family.

Its subcellular location is the secreted. Functionally, secreted subtilisin-like serine protease with keratinolytic activity that contributes to pathogenicity. This is Subtilisin-like protease CPC735_015300 from Coccidioides posadasii (strain C735) (Valley fever fungus).